The chain runs to 82 residues: Small ribosomal subunit protein bS16 (82 aa).

The protein belongs to the bacterial ribosomal protein bS16 family.

This is Small ribosomal subunit protein bS16 from Aliivibrio fischeri (strain ATCC 700601 / ES114) (Vibrio fischeri).